A 145-amino-acid polypeptide reads, in one-letter code: Lysozyme-like protein 4 (145 aa).

An N-terminal signal peptide occupies residues 1–19 (MKASVVLSLIGYLVVPSDT). Residues 20 to 145 (AVLGRCVVAK…LARWLDGCKL (126 aa)) form the C-type lysozyme domain. 4 disulfide bridges follow: Cys25–Cys143, Cys49–Cys130, Cys84–Cys95, and Cys91–Cys109. Glu54 is an active-site residue.

This sequence belongs to the glycosyl hydrolase 22 family. Monomer.

Its subcellular location is the secreted. The protein localises to the cytoplasmic vesicle. The protein resides in the secretory vesicle. It localises to the acrosome. It is found in the cell projection. Its subcellular location is the cilium. The protein localises to the flagellum. Functionally, may be involved in fertilization. Has no detectable bacteriolytic and lysozyme activities in vitro. This Bos taurus (Bovine) protein is Lysozyme-like protein 4 (LYZL4).